Reading from the N-terminus, the 141-residue chain is MLMPKRTKYRKQMKGRNRGKAHRGNSIAFGDIAIKAIEHGRIDSRQIESARVAMTRHIKRAGKVWIRVFPDKPLTAKPLETRMGKGKGSVEKWVMNIKPGRIVYEMLGIEEGLAREALALSQSKLPFKTKIVTCESENEIY.

Positions 1–23 (MLMPKRTKYRKQMKGRNRGKAHR) are disordered.

The protein belongs to the universal ribosomal protein uL16 family. As to quaternary structure, part of the 50S ribosomal subunit.

Its function is as follows. Binds 23S rRNA and is also seen to make contacts with the A and possibly P site tRNAs. The sequence is that of Large ribosomal subunit protein uL16 from Helicobacter pylori (strain J99 / ATCC 700824) (Campylobacter pylori J99).